The following is a 294-amino-acid chain: Nucleotide-binding protein Adeh_0147 (294 aa).

17-24 serves as a coordination point for ATP; the sequence is GVSGSGKS. 68-71 is a binding site for GTP; sequence DARE.

Belongs to the RapZ-like family.

Its function is as follows. Displays ATPase and GTPase activities. This chain is Nucleotide-binding protein Adeh_0147, found in Anaeromyxobacter dehalogenans (strain 2CP-C).